We begin with the raw amino-acid sequence, 368 residues long: Protein tesmin/TSO1-like CXC 8 (368 aa).

The 122-residue stretch at 64 to 185 (KHKGCRCKQS…KCINCKNVSE (122 aa)) folds into the CRC domain.

Belongs to the lin-54 family.

The protein localises to the nucleus. Plays a role in development of both male and female reproductive tissues. The chain is Protein tesmin/TSO1-like CXC 8 (TCX8) from Arabidopsis thaliana (Mouse-ear cress).